The following is a 355-amino-acid chain: S-adenosylmethionine:tRNA ribosyltransferase-isomerase (355 aa).

It belongs to the QueA family. Monomer.

Its subcellular location is the cytoplasm. The catalysed reaction is 7-aminomethyl-7-carbaguanosine(34) in tRNA + S-adenosyl-L-methionine = epoxyqueuosine(34) in tRNA + adenine + L-methionine + 2 H(+). It participates in tRNA modification; tRNA-queuosine biosynthesis. Functionally, transfers and isomerizes the ribose moiety from AdoMet to the 7-aminomethyl group of 7-deazaguanine (preQ1-tRNA) to give epoxyqueuosine (oQ-tRNA). This is S-adenosylmethionine:tRNA ribosyltransferase-isomerase from Burkholderia ambifaria (strain MC40-6).